Consider the following 197-residue polypeptide: Phospholipid hydroperoxide glutathione peroxidase (197 aa).

A Phosphoserine modification is found at S40. U73 is an active-site residue. Residue U73 is a non-standard amino acid, selenocysteine.

Belongs to the glutathione peroxidase family. Monomer. Has a tendency to form higher mass oligomers. Interacts with FUNDC1; this interaction promotes GPX4 recruitment into mitochondria through TOM/TIM complex where it is degraded by mitophagy.

Its subcellular location is the mitochondrion. It is found in the cytoplasm. The catalysed reaction is a hydroperoxy polyunsaturated fatty acid + 2 glutathione = a hydroxy polyunsaturated fatty acid + glutathione disulfide + H2O. It catalyses the reaction 2 glutathione + H2O2 = glutathione disulfide + 2 H2O. The enzyme catalyses tert-butyl hydroperoxide + 2 glutathione = tert-butanol + glutathione disulfide + H2O. It carries out the reaction cumene hydroperoxide + 2 glutathione = 2-phenylpropan-2-ol + glutathione disulfide + H2O. The catalysed reaction is (9S)-hydroperoxy-(10E,12Z)-octadecadienoate + 2 glutathione = (9S)-hydroxy-(10E,12Z)-octadecadienoate + glutathione disulfide + H2O. It catalyses the reaction (13S)-hydroperoxy-(9Z,11E)-octadecadienoate + 2 glutathione = (13S)-hydroxy-(9Z,11E)-octadecadienoate + glutathione disulfide + H2O. The enzyme catalyses (5S)-hydroperoxy-(6E,8Z,11Z,14Z)-eicosatetraenoate + 2 glutathione = (5S)-hydroxy-(6E,8Z,11Z,14Z)-eicosatetraenoate + glutathione disulfide + H2O. It carries out the reaction (12R)-hydroperoxy-(5Z,8Z,10E,14Z)-eicosatetraenoate + 2 glutathione = (12R)-hydroxy-(5Z,8Z,10E,14Z)-eicosatetraenoate + glutathione disulfide + H2O. The catalysed reaction is (12S)-hydroperoxy-(5Z,8Z,10E,14Z)-eicosatetraenoate + 2 glutathione = (12S)-hydroxy-(5Z,8Z,10E,14Z)-eicosatetraenoate + glutathione disulfide + H2O. It catalyses the reaction (15S)-hydroperoxy-(5Z,8Z,11Z,13E)-eicosatetraenoate + 2 glutathione = (15S)-hydroxy-(5Z,8Z,11Z,13E)-eicosatetraenoate + glutathione disulfide + H2O. The enzyme catalyses (5S)-hydroperoxy-(6E,8Z,11Z,14Z,17Z)-eicosapentaenoate + 2 glutathione = (5S)-hydroxy-(6E,8Z,11Z,14Z,17Z)-eicosapentaenoate + glutathione disulfide + H2O. It carries out the reaction (12S)-hydroperoxy-(5Z,8Z,10E,14Z,17Z)-eicosapentaenoate + 2 glutathione = (12S)-hydroxy-(5Z,8Z,10E,14Z,17Z)-eicosapentaenoate + glutathione disulfide + H2O. The catalysed reaction is (15S)-hydroperoxy-(5Z,8Z,11Z,13E,17Z)-eicosapentaenoate + 2 glutathione = (15S)-hydroxy-(5Z,8Z,11Z,13E,17Z)-eicosapentaenoate + glutathione disulfide + H2O. It catalyses the reaction (15S)-hydroperoxy-(11Z,13E)-eicosadienoate + 2 glutathione = (15S)-hydroxy-(11Z,13E)-eicosadienoate + glutathione disulfide + H2O. The enzyme catalyses (17S)-hydroperoxy-(4Z,7Z,10Z,13Z,15E,19Z)-docosahexaenoate + 2 glutathione = (17S)-hydroxy-(4Z,7Z,10Z,13Z,15E,19Z)-docosahexaenoate + glutathione disulfide + H2O. It carries out the reaction a hydroperoxy-1,2-diacyl-glycero-3-phosphocholine + 2 glutathione = a hydroxy-1,2-diacyl-glycero-3-phosphocholine + glutathione disulfide + H2O. In terms of biological role, essential antioxidant peroxidase that directly reduces phospholipid hydroperoxide even if they are incorporated in membranes and lipoproteins. Can also reduce fatty acid hydroperoxide, cholesterol hydroperoxide and thymine hydroperoxide. Plays a key role in protecting cells from oxidative damage by preventing membrane lipid peroxidation. Required to prevent cells from ferroptosis, a non-apoptotic cell death resulting from an iron-dependent accumulation of lipid reactive oxygen species. The presence of selenocysteine (Sec) versus Cys at the active site is essential for life: it provides resistance to overoxidation and prevents cells against ferroptosis. The presence of Sec at the active site is also essential for the survival of a specific type of parvalbumin-positive interneurons, thereby preventing against fatal epileptic seizures. May be required to protect cells from the toxicity of ingested lipid hydroperoxides. Required for normal sperm development and male fertility. Essential for maturation and survival of photoreceptor cells. Plays a role in a primary T-cell response to viral and parasitic infection by protecting T-cells from ferroptosis and by supporting T-cell expansion. Plays a role of glutathione peroxidase in platelets in the arachidonic acid metabolism. Reduces hydroperoxy ester lipids formed by a 15-lipoxygenase that may play a role as down-regulator of the cellular 15-lipoxygenase pathway. Can also reduce small soluble hydroperoxides such as H2O2, cumene hydroperoxide and tert-butyl hydroperoxide. In Bos taurus (Bovine), this protein is Phospholipid hydroperoxide glutathione peroxidase.